A 198-amino-acid polypeptide reads, in one-letter code: Imidazoleglycerol-phosphate dehydratase (198 aa).

Belongs to the imidazoleglycerol-phosphate dehydratase family.

Its subcellular location is the cytoplasm. It catalyses the reaction D-erythro-1-(imidazol-4-yl)glycerol 3-phosphate = 3-(imidazol-4-yl)-2-oxopropyl phosphate + H2O. The protein operates within amino-acid biosynthesis; L-histidine biosynthesis; L-histidine from 5-phospho-alpha-D-ribose 1-diphosphate: step 6/9. The polypeptide is Imidazoleglycerol-phosphate dehydratase (Streptomyces griseus subsp. griseus (strain JCM 4626 / CBS 651.72 / NBRC 13350 / KCC S-0626 / ISP 5235)).